Reading from the N-terminus, the 503-residue chain is Probable cytosol aminopeptidase (503 aa).

Residues K274 and D279 each contribute to the Mn(2+) site. The active site involves K286. Mn(2+) is bound by residues D297, D356, and E358. R360 is a catalytic residue.

Belongs to the peptidase M17 family. Mn(2+) is required as a cofactor.

It is found in the cytoplasm. The enzyme catalyses Release of an N-terminal amino acid, Xaa-|-Yaa-, in which Xaa is preferably Leu, but may be other amino acids including Pro although not Arg or Lys, and Yaa may be Pro. Amino acid amides and methyl esters are also readily hydrolyzed, but rates on arylamides are exceedingly low.. It catalyses the reaction Release of an N-terminal amino acid, preferentially leucine, but not glutamic or aspartic acids.. Its function is as follows. Presumably involved in the processing and regular turnover of intracellular proteins. Catalyzes the removal of unsubstituted N-terminal amino acids from various peptides. This Burkholderia lata (strain ATCC 17760 / DSM 23089 / LMG 22485 / NCIMB 9086 / R18194 / 383) protein is Probable cytosol aminopeptidase.